Reading from the N-terminus, the 609-residue chain is Sulfite reductase [NADPH] flavoprotein alpha-component (609 aa).

Residues 72–210 enclose the Flavodoxin-like domain; sequence ITLISASQTG…LAAQWRRQLV (139 aa). FMN-binding positions include 78-83 and 125-128; these read SQTGNA and STQG. The FAD-binding FR-type domain occupies 244 to 458; sequence SSPLQATFAV…IEHNDNFRLP (215 aa). Residues Thr-332, Gln-366, 396–399, 414–416, Tyr-420, and 429–432 each bind FAD; these read RLYS, TVG, and GGAS. Residues 529 to 530, 535 to 539, and Asp-571 contribute to the NADP(+) site; these read SR and KIYVQ. Tyr-609 contacts FAD.

Belongs to the NADPH-dependent sulphite reductase flavoprotein subunit CysJ family. This sequence in the N-terminal section; belongs to the flavodoxin family. It in the C-terminal section; belongs to the flavoprotein pyridine nucleotide cytochrome reductase family. As to quaternary structure, alpha(8)-beta(8). The alpha component is a flavoprotein, the beta component is a hemoprotein. FAD serves as cofactor. Requires FMN as cofactor.

The catalysed reaction is hydrogen sulfide + 3 NADP(+) + 3 H2O = sulfite + 3 NADPH + 4 H(+). It functions in the pathway sulfur metabolism; hydrogen sulfide biosynthesis; hydrogen sulfide from sulfite (NADPH route): step 1/1. Functionally, component of the sulfite reductase complex that catalyzes the 6-electron reduction of sulfite to sulfide. This is one of several activities required for the biosynthesis of L-cysteine from sulfate. The flavoprotein component catalyzes the electron flow from NADPH -&gt; FAD -&gt; FMN to the hemoprotein component. This chain is Sulfite reductase [NADPH] flavoprotein alpha-component, found in Pectobacterium atrosepticum (strain SCRI 1043 / ATCC BAA-672) (Erwinia carotovora subsp. atroseptica).